Reading from the N-terminus, the 274-residue chain is Sulfur carrier protein FdhD (274 aa).

Cysteine 121 serves as the catalytic Cysteine persulfide intermediate. 258–263 is a binding site for Mo-bis(molybdopterin guanine dinucleotide); that stretch reads FSKPGR.

This sequence belongs to the FdhD family.

It localises to the cytoplasm. Functionally, required for formate dehydrogenase (FDH) activity. Acts as a sulfur carrier protein that transfers sulfur from IscS to the molybdenum cofactor prior to its insertion into FDH. The sequence is that of Sulfur carrier protein FdhD from Yersinia pseudotuberculosis serotype O:3 (strain YPIII).